A 1076-amino-acid polypeptide reads, in one-letter code: JmjC domain-containing histone demethylation protein 1 (1076 aa).

The 173-residue stretch at 93-265 (FSQTPLEDLV…TQLRVYQVEN (173 aa)) folds into the JmjC domain. Position 159 (Thr159) interacts with substrate. The Fe cation site is built by His162 and Asp164. Lys179 is a binding site for substrate. Position 233 (His233) interacts with Fe cation. Disordered regions lie at residues 598 to 748 (FEEE…DPVV) and 789 to 1056 (KIEP…KIPS). Positions 610–634 (DQEEEEYDAEEPEDQEEEEEDEYQA) are enriched in acidic residues. Basic and acidic residues predominate over residues 653 to 680 (AKNDESEEVSVKKDKKEKMEKVEKDEKR). Over residues 681–698 (RNSKSKKDKISKEKKKKE) the composition is skewed to basic residues. 2 stretches are compositionally biased toward basic and acidic residues: residues 699-714 (RERI…ELRA) and 789-811 (KIEP…EPEH). Positions 935 to 946 (ASAPSSRHSSIS) are enriched in low complexity. 2 stretches are compositionally biased toward polar residues: residues 957–990 (FNSS…SINR) and 1004–1019 (DSLS…TYPT). The segment covering 1044–1056 (QHHDDGHKHKIPS) has biased composition (basic and acidic residues).

The protein belongs to the JHDM1 histone demethylase family. Fe(2+) is required as a cofactor.

The protein localises to the nucleus. It catalyses the reaction N(6),N(6)-dimethyl-L-lysyl(36)-[histone H3] + 2 2-oxoglutarate + 2 O2 = L-lysyl(36)-[histone H3] + 2 formaldehyde + 2 succinate + 2 CO2. Its function is as follows. Histone demethylase that specifically demethylates 'Lys-36' of histone H3, thereby playing a central role in histone code. Has a role in regulating lifespan. The polypeptide is JmjC domain-containing histone demethylation protein 1 (jhdm-1) (Caenorhabditis elegans).